A 101-amino-acid polypeptide reads, in one-letter code: MRGYRSSQRTFFRGFDPRHAYRFRGDGRHGGMGGALKIVFLGMMTYFIAKKAFRSSQHPPTDFNAPVQSVPQRAQRPSDTRLQGPVLLASNHPSGDSASPE.

The chain crosses the membrane as a helical span at residues 30–49 (GGMGGALKIVFLGMMTYFIA). A disordered region spans residues 56 to 101 (SQHPPTDFNAPVQSVPQRAQRPSDTRLQGPVLLASNHPSGDSASPE). 2 stretches are compositionally biased toward polar residues: residues 66 to 81 (PVQS…SDTR) and 91 to 101 (NHPSGDSASPE).

Its subcellular location is the membrane. Its function is as follows. Part of the gene cluster that mediates the biosynthesis of oxopyrrolidines, polyketide-amino acid hybrid compounds with feature structures of tetramic acid. Does not seem to play a role in oxopyrrolidines A and B biosynthesis. The sequence is that of opdI from Penicillium oxalicum (strain 114-2 / CGMCC 5302) (Penicillium decumbens).